Reading from the N-terminus, the 386-residue chain is Putative F-box/kelch-repeat protein At3g17280 (386 aa).

An F-box domain is found at 1 to 48 (MTTISDLPYDLLPEILSRLPTKSIPKLKTTCKKWYALFKDPKFVEKKL). Kelch repeat units lie at residues 155–203 (SYKI…LKES) and 340–386 (RIYI…IVEV).

The sequence is that of Putative F-box/kelch-repeat protein At3g17280 from Arabidopsis thaliana (Mouse-ear cress).